The sequence spans 419 residues: Enolase (419 aa).

(2R)-2-phosphoglycerate is bound at residue Q161. Residue E205 is the Proton donor of the active site. Mg(2+)-binding residues include D240, E283, and D309. (2R)-2-phosphoglycerate contacts are provided by K334, R363, S364, and K385. K334 functions as the Proton acceptor in the catalytic mechanism.

It belongs to the enolase family. Mg(2+) is required as a cofactor.

It localises to the cytoplasm. Its subcellular location is the secreted. The protein resides in the cell surface. The catalysed reaction is (2R)-2-phosphoglycerate = phosphoenolpyruvate + H2O. Its pathway is carbohydrate degradation; glycolysis; pyruvate from D-glyceraldehyde 3-phosphate: step 4/5. Its function is as follows. Catalyzes the reversible conversion of 2-phosphoglycerate (2-PG) into phosphoenolpyruvate (PEP). It is essential for the degradation of carbohydrates via glycolysis. The protein is Enolase of Saccharolobus islandicus (strain Y.G.57.14 / Yellowstone #1) (Sulfolobus islandicus).